The chain runs to 355 residues: Protein RecA (355 aa).

Residue 72-79 (GPESSGKT) coordinates ATP.

It belongs to the RecA family.

The protein resides in the cytoplasm. Can catalyze the hydrolysis of ATP in the presence of single-stranded DNA, the ATP-dependent uptake of single-stranded DNA by duplex DNA, and the ATP-dependent hybridization of homologous single-stranded DNAs. It interacts with LexA causing its activation and leading to its autocatalytic cleavage. This is Protein RecA from Wolbachia sp. subsp. Brugia malayi (strain TRS).